Here is a 161-residue protein sequence, read N- to C-terminus: EP300-interacting inhibitor of differentiation 2B (161 aa).

2 disordered regions span residues 1–26 and 54–77; these read MAEPTGLLEMSELPGDSSVPQVGTAS and ARSMARMPGPVPGPIPSSVPGLAS.

In terms of assembly, homodimer and heterodimer with EID2. Interacts with HDAC1 and HDAC2.

It is found in the nucleus. In terms of biological role, acts as a repressor of MYOD-dependent transcription, glucocorticoid receptor-dependent transcription, and muscle differentiation. The protein is EP300-interacting inhibitor of differentiation 2B of Homo sapiens (Human).